Reading from the N-terminus, the 834-residue chain is MVQRWLYSTNAKDIAVLYFMLAIFSGMAGTAMSLIIRLELAAPGSQYLHGNSQLFNGAPTSAYISLMRTALVLWIINRYLKHMTNSVGANFTGTMACHKTPMISVGGVKCYMVRLTNFLQVFIRITISSYHLDMVKQVWLFYVEVIRLWFIVLDSTGSVKKMKDTNNTKGNTKSEGSTERGNSGVDRGMVVPNTQMKMRFLNQVRYYSVNNNLKMGKDTNIELSKDTSTSDLLEFEKLVMDNMNEENMNNNLLSIMKNVDMLMLAYNRIKSKPGNMTPGTTLETLDGMNMMYLNKLSNELGTGKFKFKPMRMVNIPKPKGGMRPLSVGNPRDKIVQEVMRMILDTIFDKKMSTHSHGFRKNMSCQTAIWEVRNMFGGSNWFIEVDLKKCFDTISHDLIIKELKRYISDKGFIDLVYKLLRAGYIDEKGTYHKPMLGLPQGSLISPILCNIVMTLVDNWLEDYINLYNKGKVKKQHPTYKKLSRMIAKAKMFSTRLKLHKERAKGPTFIYNDPNFKRMKYVRYADDILIGVLGSKNDCKMIKRDLNNFLNSLGLTMNEEKTLITCATETPARFLGYNISITPLKRMPTVTKTIRGKTIRSRNTTRPIINAPIRDIINKLATNGYCKHNKNGRMGVPTRVGRWTYEEPRTIINNYKALGRGILNYYKLATNYKRLRERIYYVLYYSCVLTLASKYRLKTMSKTIKKFGYNLNIIENDKLIANFPRNTFDNIKKIENHGMFMYMSEAKVTDPFEYIDSIKYMLPTAKANFNKPCSICNSTIDVEMHHVKQLHRGMLKATKDYITGRMITMNRKQIPLCKQCHIKTHKNKFKNMGPGM.

The tract at residues 162 to 188 is disordered; it reads MKDTNNTKGNTKSEGSTERGNSGVDRG. The segment covering 167–181 has biased composition (polar residues); the sequence is NTKGNTKSEGSTERG. In terms of domain architecture, Reverse transcriptase spans 296 to 577; sequence LSNELGTGKF…TPARFLGYNI (282 aa).

The protein resides in the mitochondrion. This Saccharomyces cerevisiae (strain ATCC 204508 / S288c) (Baker's yeast) protein is Putative COX1/OXI3 intron 1 protein (AI1).